The chain runs to 336 residues: Glycerol-3-phosphate dehydrogenase [NAD(P)+] (336 aa).

The NADPH site is built by Ser14, Trp15, Arg35, Arg36, and Lys109. Lys109 and Gly139 together coordinate sn-glycerol 3-phosphate. Ala143 contacts NADPH. Positions 194, 247, 257, 258, and 259 each coordinate sn-glycerol 3-phosphate. The active-site Proton acceptor is Lys194. Arg258 lines the NADPH pocket. Position 284 (Glu284) interacts with NADPH.

This sequence belongs to the NAD-dependent glycerol-3-phosphate dehydrogenase family.

It localises to the cytoplasm. It catalyses the reaction sn-glycerol 3-phosphate + NAD(+) = dihydroxyacetone phosphate + NADH + H(+). It carries out the reaction sn-glycerol 3-phosphate + NADP(+) = dihydroxyacetone phosphate + NADPH + H(+). Its pathway is membrane lipid metabolism; glycerophospholipid metabolism. Functionally, catalyzes the reduction of the glycolytic intermediate dihydroxyacetone phosphate (DHAP) to sn-glycerol 3-phosphate (G3P), the key precursor for phospholipid synthesis. The chain is Glycerol-3-phosphate dehydrogenase [NAD(P)+] from Streptomyces coelicolor (strain ATCC BAA-471 / A3(2) / M145).